An 84-amino-acid polypeptide reads, in one-letter code: U8-theraphotoxin-Hhn1c 2 (84 aa).

The N-terminal stretch at 1–21 (MKVVLLVCLVWMMAMMELVSC) is a signal peptide. Disulfide bonds link cysteine 23/cysteine 35, cysteine 29/cysteine 44, cysteine 34/cysteine 67, cysteine 54/cysteine 75, and cysteine 69/cysteine 81.

The protein belongs to the AVIT (prokineticin) family. Expressed by the venom gland.

The protein resides in the secreted. In Cyriopagopus hainanus (Chinese bird spider), this protein is U8-theraphotoxin-Hhn1c 2.